A 99-amino-acid polypeptide reads, in one-letter code: Protein S100-Z (99 aa).

EF-hand domains lie at 13-48 (IRIF…FLSC) and 50-85 (KETQ…LTVA). Residues Ser20, Glu23, Lys28, Glu33, Asp63, Asn65, Asp67, Glu69, and Glu74 each coordinate Ca(2+).

The protein belongs to the S-100 family. Homodimer. Interacts with S100P. In terms of tissue distribution, highest level of expression in spleen and leukocytes.

This is Protein S100-Z from Homo sapiens (Human).